Reading from the N-terminus, the 393-residue chain is ATP phosphoribosyltransferase regulatory subunit (393 aa).

This sequence belongs to the class-II aminoacyl-tRNA synthetase family. HisZ subfamily. As to quaternary structure, heteromultimer composed of HisG and HisZ subunits.

The protein resides in the cytoplasm. The protein operates within amino-acid biosynthesis; L-histidine biosynthesis; L-histidine from 5-phospho-alpha-D-ribose 1-diphosphate: step 1/9. Its function is as follows. Required for the first step of histidine biosynthesis. May allow the feedback regulation of ATP phosphoribosyltransferase activity by histidine. This Shouchella clausii (strain KSM-K16) (Alkalihalobacillus clausii) protein is ATP phosphoribosyltransferase regulatory subunit.